Consider the following 231-residue polypeptide: Ribosome maturation factor RimM (231 aa).

The segment at 1–29 is disordered; sequence MSERDSGSSGRAKAKRQPGAKAPFGPFVR. The 82-residue stretch at 150–231 folds into the PRC barrel domain; it reads TDEYYWVDLV…KIIVDWEADY (82 aa).

This sequence belongs to the RimM family. As to quaternary structure, binds ribosomal protein uS19.

It is found in the cytoplasm. In terms of biological role, an accessory protein needed during the final step in the assembly of 30S ribosomal subunit, possibly for assembly of the head region. Essential for efficient processing of 16S rRNA. May be needed both before and after RbfA during the maturation of 16S rRNA. It has affinity for free ribosomal 30S subunits but not for 70S ribosomes. The sequence is that of Ribosome maturation factor RimM from Paraburkholderia phymatum (strain DSM 17167 / CIP 108236 / LMG 21445 / STM815) (Burkholderia phymatum).